Reading from the N-terminus, the 63-residue chain is DNA gyrase inhibitor YacG (63 aa).

Positions 9, 12, 28, and 32 each coordinate Zn(2+).

The protein belongs to the DNA gyrase inhibitor YacG family. In terms of assembly, interacts with GyrB. It depends on Zn(2+) as a cofactor.

Functionally, inhibits all the catalytic activities of DNA gyrase by preventing its interaction with DNA. Acts by binding directly to the C-terminal domain of GyrB, which probably disrupts DNA binding by the gyrase. The polypeptide is DNA gyrase inhibitor YacG (Salmonella arizonae (strain ATCC BAA-731 / CDC346-86 / RSK2980)).